A 104-amino-acid chain; its full sequence is Small ribosomal subunit protein bS18 (104 aa).

Basic and acidic residues predominate over residues 1–14 (MMNNEHDNFQKEVE). A disordered region spans residues 1–25 (MMNNEHDNFQKEVETTTETTFNREE).

Belongs to the bacterial ribosomal protein bS18 family. In terms of assembly, part of the 30S ribosomal subunit. Forms a tight heterodimer with protein bS6.

Its function is as follows. Binds as a heterodimer with protein bS6 to the central domain of the 16S rRNA, where it helps stabilize the platform of the 30S subunit. The sequence is that of Small ribosomal subunit protein bS18 from Mycoplasma pneumoniae (strain ATCC 29342 / M129 / Subtype 1) (Mycoplasmoides pneumoniae).